The primary structure comprises 144 residues: Ribosome maturation factor RimP (144 aa).

It belongs to the RimP family.

It localises to the cytoplasm. In terms of biological role, required for maturation of 30S ribosomal subunits. In Methylobacillus flagellatus (strain ATCC 51484 / DSM 6875 / VKM B-1610 / KT), this protein is Ribosome maturation factor RimP.